The primary structure comprises 274 residues: Large ribosomal subunit protein uL2 (274 aa).

Disordered stretches follow at residues 28–54 (KPFAPLLEKNSKTGGRNNNGRITTRHI) and 221–274 (RGTA…RSKK). Residues 39–49 (KTGGRNNNGRI) show a composition bias toward polar residues.

The protein belongs to the universal ribosomal protein uL2 family. Part of the 50S ribosomal subunit. Forms a bridge to the 30S subunit in the 70S ribosome.

One of the primary rRNA binding proteins. Required for association of the 30S and 50S subunits to form the 70S ribosome, for tRNA binding and peptide bond formation. It has been suggested to have peptidyltransferase activity; this is somewhat controversial. Makes several contacts with the 16S rRNA in the 70S ribosome. The polypeptide is Large ribosomal subunit protein uL2 (Edwardsiella ictaluri (strain 93-146)).